The following is a 346-amino-acid chain: Structure-specific endonuclease subunit SLX1 (346 aa).

Residues 10–92 (ALYCVYILRS…TNPHTSLHIP (83 aa)) form the GIY-YIG domain. The segment at 238 to 296 (CVVCKEEIDPEEGGLHAVCSNEGCEGVGHLRCWGRYLLKSEEGGGEGAILPVGGRCPRC) adopts an SLX1-type zinc-finger fold. Residues 324-336 (KVKRKRAPRKKTA) show a composition bias toward basic residues. Residues 324-346 (KVKRKRAPRKKTAKTKETREEDG) are disordered. Basic and acidic residues predominate over residues 337–346 (KTKETREEDG).

Belongs to the SLX1 family. Forms a heterodimer with SLX4. A divalent metal cation is required as a cofactor.

The protein resides in the nucleus. Catalytic subunit of the SLX1-SLX4 structure-specific endonuclease that resolves DNA secondary structures generated during DNA repair and recombination. Has endonuclease activity towards branched DNA substrates, introducing single-strand cuts in duplex DNA close to junctions with ss-DNA. This Podospora anserina (strain S / ATCC MYA-4624 / DSM 980 / FGSC 10383) (Pleurage anserina) protein is Structure-specific endonuclease subunit SLX1.